The primary structure comprises 463 residues: Trigger factor (463 aa).

One can recognise a PPIase FKBP-type domain in the interval 162–243 (GDVVTLDLEA…VSQVAARELP (82 aa)). The segment at 427–463 (TNGEIVDLDDEDETESTPETTEAAEAAEESTEDKPEA) is disordered. Residues 432–442 (VDLDDEDETES) are compositionally biased toward acidic residues.

Belongs to the FKBP-type PPIase family. Tig subfamily.

It localises to the cytoplasm. It carries out the reaction [protein]-peptidylproline (omega=180) = [protein]-peptidylproline (omega=0). In terms of biological role, involved in protein export. Acts as a chaperone by maintaining the newly synthesized protein in an open conformation. Functions as a peptidyl-prolyl cis-trans isomerase. This is Trigger factor from Streptomyces avermitilis (strain ATCC 31267 / DSM 46492 / JCM 5070 / NBRC 14893 / NCIMB 12804 / NRRL 8165 / MA-4680).